We begin with the raw amino-acid sequence, 107 residues long: High mobility group protein HMG-I/HMG-Y (107 aa).

The interval 1-107 (MSESSSKSSQ…ISQESSEEEQ (107 aa)) is disordered. Position 2 is an N-acetylserine (Ser2). Position 7 is an N6-acetyllysine (Lys7). Ser8 bears the ADP-ribosylserine mark. Residue Ser9 is modified to ADP-ribosylserine; alternate. Position 9 is a phosphoserine; alternate (Ser9). Residue Lys15 is modified to N6-acetyllysine; alternate. Residue Lys15 forms a Glycyl lysine isopeptide (Lys-Gly) (interchain with G-Cter in SUMO2); alternate linkage. Residues 15-24 (KQEKDGTEKR) are compositionally biased toward basic and acidic residues. Positions 21–31 (TEKRGRGRPRK) form a DNA-binding region, a.T hook 1. Position 26 is an asymmetric dimethylarginine; alternate (Arg26). At Arg26 the chain carries Omega-N-methylarginine; alternate. Symmetric dimethylarginine; alternate is present on Arg26. At Ser36 the chain carries Phosphoserine; by HIPK2 and CDC2. A phosphothreonine mark is found at Thr39 and Val42. 2 positions are modified to phosphoserine: Ser44 and Ser49. Thr53 carries the phosphothreonine; by HIPK2 and CDC2 modification. Residues 53–63 (TPKRPRGRPKG) constitute a DNA-binding region (a.T hook 2). The segment at 53-77 (TPKRPRGRPKGSKNKGAAKTRKTTT) is interaction with HIPK2. Residues 55–74 (KRPRGRPKGSKNKGAAKTRK) are compositionally biased toward basic residues. Asymmetric dimethylarginine; by PRMT6; alternate occurs at positions 58 and 60. Omega-N-methylarginine; by PRMT6; alternate occurs at positions 58 and 60. A Phosphothreonine modification is found at Lys67. Thr78 carries the phosphothreonine; by HIPK2 and CDC2 modification. The a.T hook 3 DNA-binding region spans 78–89 (TPGRKPRGRPKK). Over residues 93–107 (EEEEGISQESSEEEQ) the composition is skewed to acidic residues. The residue at position 99 (Ser99) is a Phosphoserine. 2 positions are modified to phosphoserine; by CK: Ser102 and Ser103.

It belongs to the HMGA family. In terms of assembly, interacts with HIPK2. In terms of processing, constitutively phosphorylated on two or three sites. Hyperphosphorylated at early stages of apoptosis, followed by dephosphorylation and methylation, which coincides with chromatin condensation. Isoforms HMG-I and HMG-Y can be phosphorylated by HIPK2. Phosphorylation of HMG-I at Ser-36, Thr-53 and Thr-78 and of HMG-Y at Thr-42 and Thr-67 by HIPK2 modulates DNA-binding affinity. Post-translationally, HMG-Y is not methylated. Methylation at Arg-58 is mutually exclusive with methylation at Arg-60.

Its subcellular location is the nucleus. It is found in the chromosome. Functionally, HMG-I/Y bind preferentially to the minor groove of A+T rich regions in double-stranded DNA. It is suggested that these proteins could function in nucleosome phasing and in the 3'-end processing of mRNA transcripts. They are also involved in the transcription regulation of genes containing, or in close proximity to A+T-rich regions. In Homo sapiens (Human), this protein is High mobility group protein HMG-I/HMG-Y (HMGA1).